The primary structure comprises 1007 residues: Mediator of RNA polymerase II transcription subunit 5 (1007 aa).

It belongs to the Mediator complex subunit 5 family. Component of the Mediator complex.

It is found in the nucleus. Functionally, component of the Mediator complex, a coactivator involved in the regulated transcription of nearly all RNA polymerase II-dependent genes. Mediator functions as a bridge to convey information from gene-specific regulatory proteins to the basal RNA polymerase II transcription machinery. Mediator is recruited to promoters by direct interactions with regulatory proteins and serves as a scaffold for the assembly of a functional preinitiation complex with RNA polymerase II and the general transcription factors. This chain is Mediator of RNA polymerase II transcription subunit 5 (nut1), found in Aspergillus fumigatus (strain ATCC MYA-4609 / CBS 101355 / FGSC A1100 / Af293) (Neosartorya fumigata).